We begin with the raw amino-acid sequence, 948 residues long: Valine--tRNA ligase (948 aa).

The short motif at 40–50 (PNVTGSLHMGH) is the 'HIGH' region element. The 'KMSKS' region signature appears at 551-555 (KMSKS). Position 554 (Lys554) interacts with ATP. A coiled-coil region spans residues 879–945 (LIDKGAELAR…GKLAEQHARI (67 aa)).

The protein belongs to the class-I aminoacyl-tRNA synthetase family. ValS type 1 subfamily. As to quaternary structure, monomer.

It localises to the cytoplasm. The enzyme catalyses tRNA(Val) + L-valine + ATP = L-valyl-tRNA(Val) + AMP + diphosphate. Its function is as follows. Catalyzes the attachment of valine to tRNA(Val). As ValRS can inadvertently accommodate and process structurally similar amino acids such as threonine, to avoid such errors, it has a 'posttransfer' editing activity that hydrolyzes mischarged Thr-tRNA(Val) in a tRNA-dependent manner. This Pseudomonas syringae pv. tomato (strain ATCC BAA-871 / DC3000) protein is Valine--tRNA ligase.